Reading from the N-terminus, the 323-residue chain is Tyrosine--tRNA ligase (323 aa).

Tyr36 serves as a coordination point for L-tyrosine. Positions 41-49 (PSGEIHLGH) match the 'HIGH' region motif. L-tyrosine-binding residues include Tyr158, Gln162, Asp165, and Gln180. The 'KMSKS' region signature appears at 214 to 218 (KMSSS). Ser217 is a binding site for ATP.

It belongs to the class-I aminoacyl-tRNA synthetase family. TyrS type 3 subfamily. In terms of assembly, homodimer.

The protein resides in the cytoplasm. The catalysed reaction is tRNA(Tyr) + L-tyrosine + ATP = L-tyrosyl-tRNA(Tyr) + AMP + diphosphate + H(+). Functionally, catalyzes the attachment of tyrosine to tRNA(Tyr) in a two-step reaction: tyrosine is first activated by ATP to form Tyr-AMP and then transferred to the acceptor end of tRNA(Tyr). This chain is Tyrosine--tRNA ligase, found in Archaeoglobus fulgidus (strain ATCC 49558 / DSM 4304 / JCM 9628 / NBRC 100126 / VC-16).